The sequence spans 311 residues: Pyrimidine-specific ribonucleoside hydrolase RihA (311 aa).

The active site involves His-240.

The protein belongs to the IUNH family. RihA subfamily.

Functionally, hydrolyzes with equal efficiency cytidine or uridine to ribose and cytosine or uracil, respectively. The protein is Pyrimidine-specific ribonucleoside hydrolase RihA of Escherichia fergusonii (strain ATCC 35469 / DSM 13698 / CCUG 18766 / IAM 14443 / JCM 21226 / LMG 7866 / NBRC 102419 / NCTC 12128 / CDC 0568-73).